We begin with the raw amino-acid sequence, 179 residues long: Large ribosomal subunit protein uL6 (179 aa).

Belongs to the universal ribosomal protein uL6 family. Part of the 50S ribosomal subunit.

In terms of biological role, this protein binds to the 23S rRNA, and is important in its secondary structure. It is located near the subunit interface in the base of the L7/L12 stalk, and near the tRNA binding site of the peptidyltransferase center. In Prochlorococcus marinus (strain MIT 9211), this protein is Large ribosomal subunit protein uL6.